The primary structure comprises 436 residues: MMHYDVAVIGGGIAGYSAALRALQAGKKVVLINQGQSALHFSSGSIDVLGRLPDGSVVNQPFDALSALQQQAPEHPYSKVGRKNSEKGLMWFKRTLDSAHVPLHHEPDGANHWRITPLGTLKNTWLSQPFVYPYRGNADFSRIMIVAIDGYRDFQPAMLRDNLAQRPELANTPMLTVNVSIPGFEGFRRNPNELRSIDIARLLRQESAWNALCDQLMRVARPDDLVIMPAIMGNGDGLHLMSKLQQVTQLRFHEVPTMPPSLLGIRIEEALHRSFIQGGGVQLKGDKVIGGNFAGSRLTAIHTQNLRDFPISAEHYVMATGSYFSQGLQASQHAIQEPIFALDVQQNPDRAQWRHAQFIAAQSHPFMTFGVTTDANLHPSRQGKTIDNLWCCGAMLSGYDPVFEGCGGGVAIATAYHAVEQILATYAQTKQPEVLL.

It belongs to the anaerobic G-3-P dehydrogenase subunit B family. Composed of a catalytic GlpA/B dimer and of membrane bound GlpC. FMN is required as a cofactor.

It catalyses the reaction a quinone + sn-glycerol 3-phosphate = dihydroxyacetone phosphate + a quinol. It functions in the pathway polyol metabolism; glycerol degradation via glycerol kinase pathway; glycerone phosphate from sn-glycerol 3-phosphate (anaerobic route): step 1/1. Its function is as follows. Conversion of glycerol 3-phosphate to dihydroxyacetone. Uses fumarate or nitrate as electron acceptor. This Vibrio cholerae serotype O1 (strain ATCC 39315 / El Tor Inaba N16961) protein is Anaerobic glycerol-3-phosphate dehydrogenase subunit B.